A 207-amino-acid chain; its full sequence is Ion-translocating oxidoreductase complex subunit G (207 aa).

The chain crosses the membrane as a helical span at residues 11–31 (GILLGFIALLCTIISAGIFFL). Threonine 175 carries the post-translational modification FMN phosphoryl threonine.

This sequence belongs to the RnfG family. The complex is composed of six subunits: RnfA, RnfB, RnfC, RnfD, RnfE and RnfG. It depends on FMN as a cofactor.

The protein resides in the cell inner membrane. Functionally, part of a membrane-bound complex that couples electron transfer with translocation of ions across the membrane. In Haemophilus influenzae (strain ATCC 51907 / DSM 11121 / KW20 / Rd), this protein is Ion-translocating oxidoreductase complex subunit G.